Reading from the N-terminus, the 435-residue chain is Gamma-glutamyl phosphate reductase (435 aa).

The protein belongs to the gamma-glutamyl phosphate reductase family.

It is found in the cytoplasm. The catalysed reaction is L-glutamate 5-semialdehyde + phosphate + NADP(+) = L-glutamyl 5-phosphate + NADPH + H(+). It functions in the pathway amino-acid biosynthesis; L-proline biosynthesis; L-glutamate 5-semialdehyde from L-glutamate: step 2/2. Catalyzes the NADPH-dependent reduction of L-glutamate 5-phosphate into L-glutamate 5-semialdehyde and phosphate. The product spontaneously undergoes cyclization to form 1-pyrroline-5-carboxylate. The sequence is that of Gamma-glutamyl phosphate reductase from Bradyrhizobium diazoefficiens (strain JCM 10833 / BCRC 13528 / IAM 13628 / NBRC 14792 / USDA 110).